Reading from the N-terminus, the 634-residue chain is Protection of telomeres protein 1 (634 aa).

DNA-binding stretches follow at residues 33 to 48 (KPPYLSKGTDYCSVVT) and 270 to 273 (SYGR).

Belongs to the telombin family. In terms of assembly, homodimer or homooligomer. Component of the shelterin complex (telosome) composed of TERF1, TERF2, TINF2, TERF2IP, ACD and POT1. Binds single-stranded telomeric DNA as a monomer. Associated component of the telomerase holoenzyme complex. Found in a complex with TERF1, TINF2 and TNKS1. Interacts with TNKS1. Forms heterodimers with ACD. Identified in a complex with ACD and single-stranded telomeric DNA. As to expression, ubiquitous.

It is found in the nucleus. The protein resides in the chromosome. The protein localises to the telomere. Component of the telomerase ribonucleoprotein (RNP) complex that is essential for the replication of chromosome termini. Is a component of the double-stranded telomeric DNA-binding TRF1 complex which is involved in the regulation of telomere length by cis-inhibition of telomerase. Also acts as a single-stranded telomeric DNA-binding protein and thus may act as a downstream effector of the TRF1 complex and may transduce information about telomere maintenance and/or length to the telomere terminus. Component of the shelterin complex (telosome) that is involved in the regulation of telomere length and protection. Shelterin associates with arrays of double-stranded TTAGGG repeats added by telomerase and protects chromosome ends; without its protective activity, telomeres are no longer hidden from the DNA damage surveillance and chromosome ends are inappropriately processed by DNA repair pathways. Binds to two or more telomeric single-stranded 5'-TTAGGG-3' repeats (G-strand) and with high specificity to a minimal telomeric single-stranded 5'-TAGGGTTAG-3' sequence. Binds telomeric single-stranded sequences internally or at proximity of a 3'-end. Its activity is TERT dependent but it does not increase TERT activity by itself. In contrast, the ACD-POT1 heterodimer enhances telomere elongation by increasing telomerase processivity. The protein is Protection of telomeres protein 1 (POT1) of Homo sapiens (Human).